Consider the following 457-residue polypeptide: Peptidyl-prolyl cis-trans isomerase FKBP5 (457 aa).

N-acetylmethionine is present on Met1. A compositionally biased stretch (basic and acidic residues) spans 1 to 11 (MTTDEGAKNNE). A disordered region spans residues 1 to 24 (MTTDEGAKNNEESPTATVAEQGED). Ser13 is subject to Phosphoserine. The residue at position 28 (Lys28) is an N6-acetyllysine. The PPIase FKBP-type 1 domain occupies 42–130 (NGEETPMIGD…KIPSNATLFF (89 aa)). Lys155 carries the N6-acetyllysine modification. Positions 157–243 (EGYSNPNEGA…GIEPNAELIY (87 aa)) constitute a PPIase FKBP-type 2 domain. 3 TPR repeats span residues 268–301 (AAIV…LEME), 317–350 (LAAF…DSAN), and 351–384 (EKGL…NPQN). The interval 420 to 457 (DAKEEANKAMGKKTSEGVTNEKGTDSQAMEEEKPEGHV) is disordered. The residue at position 445 (Ser445) is a Phosphoserine.

As to quaternary structure, part of a heteromultimeric cytoplasmic complex with HSP90AA1, HSPA1A/HSPA1B and steroid receptors. Upon ligand binding dissociates from the complex and FKBP4 takes its place. Interacts with functionally mature heterooligomeric progesterone receptor complexes along with HSP90 and TEBP. Interacts with NR3C1. Interacts with Akt/AKT1 and PHLPP1; enhancing dephosphorylation and subsequent activation of Akt/AKT1. Interacts with IFI44L; this interaction modulates the kinase activity of IKBKB and IKBKE. Interacts with IKBKB and IKBKE. Acetylation impairs ability to promote interaction between Akt/AKT1 and PHLPP1. Deacetylation by SIRT7 promotes interaction between Akt/AKT1 and PHLPP1, leading to suppress Akt/AKT1 activation. Post-translationally, ubiquitinated, leading to degradation in a proteasome-dependent manner. Deubiquitinated by USP49, leading to stabilization. In terms of tissue distribution, widely expressed, enriched in testis compared to other tissues.

It is found in the cytoplasm. Its subcellular location is the nucleus. It carries out the reaction [protein]-peptidylproline (omega=180) = [protein]-peptidylproline (omega=0). With respect to regulation, inhibited by both FK506 and rapamycin. Its function is as follows. Immunophilin protein with PPIase and co-chaperone activities. Component of unligated steroid receptors heterocomplexes through interaction with heat-shock protein 90 (HSP90). Plays a role in the intracellular trafficking of heterooligomeric forms of steroid hormone receptors maintaining the complex into the cytoplasm when unliganded. Acts as a regulator of Akt/AKT1 activity by promoting the interaction between Akt/AKT1 and PHLPP1, thereby enhancing dephosphorylation and subsequent activation of Akt/AKT1. Interacts with IKBKE and IKBKB which facilitates IKK complex assembly leading to increased IKBKE and IKBKB kinase activity, NF-kappa-B activation, and IFN production. The protein is Peptidyl-prolyl cis-trans isomerase FKBP5 (FKBP5) of Homo sapiens (Human).